A 418-amino-acid polypeptide reads, in one-letter code: Actin-related protein 3-A (418 aa).

Belongs to the actin family. ARP3 subfamily. Component of the Arp2/3 complex composed of actr2/arp2, actr3/arp3, arpc1 (arpc1a or arpc1b), arpc2, arpc3, arpc4 and arpc5.

It is found in the cytoplasm. It localises to the cytoskeleton. The protein resides in the cell projection. The protein localises to the nucleus. Functionally, ATP-binding component of the Arp2/3 complex, a multiprotein complex that mediates actin polymerization upon stimulation by nucleation-promoting factor (NPF). The Arp2/3 complex mediates the formation of branched actin networks in the cytoplasm, providing the force for cell motility. Seems to contact the pointed end of the daughter actin filament. In addition to its role in the cytoplasmic cytoskeleton, the Arp2/3 complex also promotes actin polymerization in the nucleus, thereby regulating gene transcription and repair of damaged DNA. The Arp2/3 complex promotes homologous recombination (HR) repair in response to DNA damage by promoting nuclear actin polymerization, leading to drive motility of double-strand breaks (DSBs). The protein is Actin-related protein 3-A of Xenopus laevis (African clawed frog).